We begin with the raw amino-acid sequence, 1117 residues long: A disintegrin and metalloproteinase with thrombospondin motifs 6 (1117 aa).

A signal peptide spans 1–21; it reads MEILWKTLTWILSLIMASSEF. Residues 22-244 constitute a propeptide that is removed on maturation; it reads HSDHRLSYSS…NTHIHHRQKR (223 aa). N-linked (GlcNAc...) asparagine glycosylation is found at Asn-99, Asn-172, Asn-222, and Asn-234. The region spanning 250–468 is the Peptidase M12B domain; that stretch reads RFVETLVVAD…GRGTCLDNEP (219 aa). 11 disulfide bridges follow: Cys-326–Cys-387, Cys-362–Cys-369, Cys-381–Cys-463, Cys-420–Cys-447, Cys-490–Cys-512, Cys-501–Cys-519, Cys-507–Cys-542, Cys-532–Cys-547, Cys-570–Cys-607, Cys-574–Cys-612, and Cys-585–Cys-597. His-403 is a binding site for Zn(2+). Glu-404 is an active-site residue. Zn(2+) contacts are provided by His-407 and His-413. One can recognise a Disintegrin domain in the interval 495-557; the sequence is GATSRQCKYG…VPFGTWPQSI (63 aa). The region spanning 558–613 is the TSP type-1 1 domain; sequence DGGWGPWSLWGECSRTCGGGVSSSLRHCDSPAPSGGGKYCLGERKRYRSCNTDPCP. The tract at residues 717 to 843 is spacer; it reads DAIEGFFNDS…GSGDNEVGFT (127 aa). A glycan (N-linked (GlcNAc...) asparagine) is linked at Asn-724. 4 consecutive TSP type-1 domains span residues 840 to 900, 902 to 960, 962 to 1007, and 1018 to 1073; these read VGFT…EPCP, EWFI…QSCP, QWVA…SKPP, and PPPR…SKCD. 3 cysteine pairs are disulfide-bonded: Cys-911-Cys-954, Cys-915-Cys-959, and Cys-926-Cys-943. Asn-956 carries an N-linked (GlcNAc...) asparagine glycan. In terms of domain architecture, PLAC spans 1079–1117; it reads NTEECKDVNKVAYCPLVLKFKFCSRAYFRQMCCKTCQGH.

Requires Zn(2+) as cofactor. Post-translationally, the precursor is cleaved by a furin endopeptidase. Glycosylated. Can be O-fucosylated by POFUT2 on a serine or a threonine residue found within the consensus sequence C1-X(2)-(S/T)-C2-G of the TSP type-1 repeat domains where C1 and C2 are the first and second cysteine residue of the repeat, respectively. Fucosylated repeats can then be further glycosylated by the addition of a beta-1,3-glucose residue by the glucosyltransferase, B3GALTL. Fucosylation mediates the efficient secretion of ADAMTS family members. Can also be C-glycosylated with one or two mannose molecules on tryptophan residues within the consensus sequence W-X-X-W of the TPRs, and N-glycosylated. These other glycosylations can also facilitate secretion. As to expression, expressed at low levels in placenta and barely detectable in a number of other tissues.

It is found in the secreted. The protein resides in the extracellular space. Its subcellular location is the extracellular matrix. The chain is A disintegrin and metalloproteinase with thrombospondin motifs 6 (ADAMTS6) from Homo sapiens (Human).